The primary structure comprises 119 residues: Large ribosomal subunit protein uL18 (119 aa).

The protein belongs to the universal ribosomal protein uL18 family. As to quaternary structure, part of the 50S ribosomal subunit; part of the 5S rRNA/L5/L18/L25 subcomplex. Contacts the 5S and 23S rRNAs.

Its function is as follows. This is one of the proteins that bind and probably mediate the attachment of the 5S RNA into the large ribosomal subunit, where it forms part of the central protuberance. In Ruegeria sp. (strain TM1040) (Silicibacter sp.), this protein is Large ribosomal subunit protein uL18.